Reading from the N-terminus, the 138-residue chain is Nucleoside diphosphate kinase (138 aa).

The ATP site is built by Lys9, Phe57, Arg85, Thr91, Arg102, and Asn112. The active-site Pros-phosphohistidine intermediate is His115.

The protein belongs to the NDK family. In terms of assembly, homotetramer. Requires Mg(2+) as cofactor.

The protein resides in the cytoplasm. The enzyme catalyses a 2'-deoxyribonucleoside 5'-diphosphate + ATP = a 2'-deoxyribonucleoside 5'-triphosphate + ADP. It carries out the reaction a ribonucleoside 5'-diphosphate + ATP = a ribonucleoside 5'-triphosphate + ADP. Major role in the synthesis of nucleoside triphosphates other than ATP. The ATP gamma phosphate is transferred to the NDP beta phosphate via a ping-pong mechanism, using a phosphorylated active-site intermediate. The polypeptide is Nucleoside diphosphate kinase (Trichlorobacter lovleyi (strain ATCC BAA-1151 / DSM 17278 / SZ) (Geobacter lovleyi)).